The sequence spans 873 residues: DNA mismatch repair protein MutS (873 aa).

620–627 (GPNMAGKS) serves as a coordination point for ATP.

It belongs to the DNA mismatch repair MutS family.

This protein is involved in the repair of mismatches in DNA. It is possible that it carries out the mismatch recognition step. This protein has a weak ATPase activity. This Ruminiclostridium cellulolyticum (strain ATCC 35319 / DSM 5812 / JCM 6584 / H10) (Clostridium cellulolyticum) protein is DNA mismatch repair protein MutS.